A 933-amino-acid chain; its full sequence is uncharacterized protein (933 aa).

Positions 244 to 255 (KKDIGAKPKPVD) are enriched in basic and acidic residues. Disordered stretches follow at residues 244–277 (KKDI…ELPD) and 343–364 (SAPH…EWKG). Residues 343–353 (SAPHQPSSQHA) show a composition bias toward polar residues. Residues 771-791 (VIHGMVLMFAGGKLLFGGCVL) form a helical membrane-spanning segment. The span at 890–907 (DKIEKEPPPSPEKVKPPE) shows a compositional bias: basic and acidic residues. The segment at 890 to 933 (DKIEKEPPPSPEKVKPPEIELQPFTKMRRSSKKTAGFKKLNSKK) is disordered. Basic residues predominate over residues 915–933 (KMRRSSKKTAGFKKLNSKK).

The protein resides in the membrane. This is an uncharacterized protein from Mus musculus (Mouse).